The sequence spans 117 residues: Protein Wnt-10b (117 aa).

Serine 1 is lipidated: O-palmitoleoyl serine; by PORCN. A disulfide bridge connects residues cysteine 83 and cysteine 98. Asparagine 84 carries N-linked (GlcNAc...) asparagine glycosylation.

It belongs to the Wnt family. Post-translationally, palmitoleoylation is required for efficient binding to frizzled receptors. Depalmitoleoylation leads to Wnt signaling pathway inhibition.

It localises to the secreted. It is found in the extracellular space. Its subcellular location is the extracellular matrix. In terms of biological role, member of the Wnt ligand gene family that encodes for secreted proteins, which activate the Wnt signaling cascade. Involved in neurogenesis. Performs a partially redundant function with wnt1 in the formation of the midbrain-hindbrain boundary (MHB) organizer. This is Protein Wnt-10b (WNT-10B) from Plethodon jordani (Red-cheeked salamander).